The following is a 1808-amino-acid chain: Tenascin (1808 aa).

Residues 1–22 (MGLPSQVLACAILGLLYQHASG) form the signal peptide. The propeptide occupies 23–33 (GLIKRIIRQKR). The N-linked (GlcNAc...) asparagine glycan is linked to Asn-38. An O-linked (Xyl...) (chondroitin sulfate) serine glycan is attached at Ser-72. Positions 118–142 (DIKDLLSRLEELEGLVSSLREQCAS) form a coiled coil. Residues Asn-168 and Asn-186 are each glycosylated (N-linked (GlcNAc...) asparagine). The 13-residue stretch at 176 to 188 (CVCEPGWKGPNCS) folds into the EGF-like 1; incomplete domain. EGF-like domains follow at residues 188–219 (SEPA…EDCS), 219–250 (SQAA…PDCG), 250–281 (GEEL…EDCN), 281–312 (NEPL…EDCG), 312–343 (GELI…EDCG), 343–374 (GELT…DDCS), 374–405 (SQKR…EDCG), 405–436 (GELR…EDCG), 436–467 (GELR…EDCG), 467–498 (GELR…EDCG), 498–529 (GELR…EDCG), 529–560 (GELS…EDCR), and 560–591 (RERS…IDCS). 39 cysteine pairs are disulfide-bonded: Cys-192-Cys-202, Cys-196-Cys-207, Cys-209-Cys-218, Cys-223-Cys-233, Cys-227-Cys-238, Cys-240-Cys-249, Cys-254-Cys-264, Cys-258-Cys-269, Cys-271-Cys-280, Cys-285-Cys-295, Cys-289-Cys-300, Cys-302-Cys-311, Cys-316-Cys-326, Cys-320-Cys-331, Cys-333-Cys-342, Cys-347-Cys-357, Cys-351-Cys-362, Cys-364-Cys-373, Cys-378-Cys-388, Cys-382-Cys-393, Cys-395-Cys-404, Cys-409-Cys-419, Cys-413-Cys-424, Cys-426-Cys-435, Cys-440-Cys-450, Cys-444-Cys-455, Cys-457-Cys-466, Cys-471-Cys-481, Cys-475-Cys-486, Cys-488-Cys-497, Cys-502-Cys-512, Cys-506-Cys-517, Cys-519-Cys-528, Cys-533-Cys-543, Cys-537-Cys-548, Cys-550-Cys-559, Cys-564-Cys-574, Cys-568-Cys-579, and Cys-581-Cys-590. Residue Asn-328 is glycosylated (N-linked (GlcNAc...) asparagine). Fibronectin type-III domains follow at residues 595-685 (PPTE…LPAP), 686-775 (EGLK…TKLD), 776-866 (APSQ…DLDA), 867-957 (PRNL…TDLD), 958-1046 (NPKD…EEEP), 1047-1138 (ELGN…AHPE), 1139-1228 (VGEL…EAEP), 1229-1318 (EVDN…TVVG), 1319-1408 (SPKG…ALDS), 1409-1495 (PSGL…TGLD), and 1496-1584 (APKD…TGLL). Residues Asn-603, Asn-643, Asn-751, and Asn-759 are each glycosylated (N-linked (GlcNAc...) asparagine). N-linked (GlcNAc...) asparagine glycosylation is found at Asn-1050, Asn-1090, Asn-1101, Asn-1112, Asn-1153, and Asn-1183. N-linked (GlcNAc...) asparagine glycosylation occurs at Asn-1416. Residues 1582–1797 (GLLYPYPKDC…FAEMKLRPSS (216 aa)) form the Fibrinogen C-terminal domain. 2 N-linked (GlcNAc...) asparagine glycosylation sites follow: Asn-1736 and Asn-1769.

Belongs to the tenascin family. Homohexamer; disulfide-linked. A homotrimer may be formed in the triple coiled-coil region and may be stabilized by disulfide rings at both ends. Two of such half-hexabrachions may be disulfide linked within the central globule. Interacts with CSPG5. Expressed in the brain.

It is found in the secreted. The protein resides in the extracellular space. The protein localises to the extracellular matrix. Functionally, extracellular matrix protein implicated in guidance of migrating neurons as well as axons during development, synaptic plasticity as well as neuronal regeneration. Ligand for integrins alpha-8/beta-1, alpha-9/beta-1, alpha-V/beta-3 and alpha-V/beta-6. The chain is Tenascin (TNC) from Gallus gallus (Chicken).